A 968-amino-acid chain; its full sequence is RNA polymerase-associated protein RapA (968 aa).

The region spanning 163 to 332 is the Helicase ATP-binding domain; the sequence is EVGRRYAPRV…FARLRLLDPD (170 aa). Residue 176–183 participates in ATP binding; that stretch reads DEVGLGKT. The short motif at 278–281 is the DEAH box element; the sequence is DEAH. A Helicase C-terminal domain is found at 491–655; it reads RVDWLIEFLK…EFAEDLLNVL (165 aa).

This sequence belongs to the SNF2/RAD54 helicase family. RapA subfamily. Interacts with the RNAP. Has a higher affinity for the core RNAP than for the holoenzyme. Its ATPase activity is stimulated by binding to RNAP.

Transcription regulator that activates transcription by stimulating RNA polymerase (RNAP) recycling in case of stress conditions such as supercoiled DNA or high salt concentrations. Probably acts by releasing the RNAP, when it is trapped or immobilized on tightly supercoiled DNA. Does not activate transcription on linear DNA. Probably not involved in DNA repair. The chain is RNA polymerase-associated protein RapA from Shewanella baltica (strain OS223).